Reading from the N-terminus, the 677-residue chain is Polyunsaturated fatty acid lipoxygenase ALOX15B (677 aa).

The PLAT domain occupies 2 to 125 (AKFRVRVSTG…ELVLREGAAK (124 aa)). Ca(2+) is bound by residues Gly15, Gly17, Asp39, His40, Gly42, Glu44, Asp86, and Ala87. One can recognise a Lipoxygenase domain in the interval 126–677 (VSWQDHHRTL…PPLIENSVSI (552 aa)). His374, His379, His554, and Ile677 together coordinate Fe cation.

It belongs to the lipoxygenase family. It depends on Fe cation as a cofactor.

The protein resides in the cytoplasm. It is found in the cytosol. It localises to the cell membrane. The protein localises to the cytoskeleton. Its subcellular location is the membrane. The protein resides in the cell junction. It is found in the adherens junction. It localises to the focal adhesion. The protein localises to the nucleus. The enzyme catalyses (5Z,8Z,11Z,14Z)-eicosatetraenoate + O2 = (15S)-hydroperoxy-(5Z,8Z,11Z,13E)-eicosatetraenoate. The catalysed reaction is (9Z,12Z)-octadecadienoate + O2 = 13-hydroperoxy-(9Z,11E)-octadecadienoate. It catalyses the reaction (5S)-hydroxy-(6E,8Z,11Z,14Z)-eicosatetraenoate + O2 = (5S)-hydroxy-(15S)-hydroperoxy-(6E,8Z,11Z,13E)-eicosatetraenoate. It carries out the reaction (5Z,8Z,11Z,14Z)-eicosatetraenoate + O2 = 5-hydroperoxy-(6E,8Z,11Z,14Z)-eicosatetraenoate. The enzyme catalyses (5S,6R)-dihydroxy-(7E,9E,11Z,14Z)-eicosatetraenoate + O2 = (5S,6R)-dihydroxy-(15S)-hydroperoxy-(7E,9E,11Z,13E)-eicosatetraenoate. The catalysed reaction is (5S)-hydroperoxy-(6E,8Z,11Z,14Z)-eicosatetraenoate + O2 = (5S,15S)-dihydroperoxy-(6E,8Z,11Z,13E)-eicosatetraenoate. It catalyses the reaction 2-(5Z,8Z,11Z,14Z-eicosatetraenoyl)-glycerol + O2 = 2-[15(S)-hydroperoxy-(5Z,8Z,11Z,13E)-eicosatetraenoyl]-glycerol. It carries out the reaction (8S)-hydroperoxy-(5Z,9E,11Z,14Z)-eicosatetraenoate + O2 = (8S,15S)-dihydroperoxy-(5Z,9E,11Z,13E)-eicosatetraenoate. The enzyme catalyses N-(5Z,8Z,11Z,14Z)-eicosatetraenoyl-L-alanine + O2 = N-(15S)-hydroperoxy-(5Z,8Z,11Z,13E)-eicosatetraenoyl-alanine. The catalysed reaction is N-(5Z,8Z,11Z,14Z)-eicosatetraenoyl-gamma-aminobutanoate + O2 = N-(15S)-hydroperoxy-(5Z,8Z,11Z,13E)-eicosatetraenoyl-gamma-aminobutanoate. It catalyses the reaction N-(5Z,8Z,11Z,14Z)-eicosatetraenoyl-glycine + O2 = N-(15S)-hydroperoxy-(5Z,8Z,11Z,13E)-eicosatetraenoyl-glycine. It carries out the reaction N-(5Z,8Z,11Z,14Z)-eicosatetraenoyl-taurine + O2 = N-(15S)-hydroperoxy-(5Z,8Z,11Z,13E)-eicosatetraenoyl-taurine. The enzyme catalyses 2-(5Z,8Z,11Z,14Z-eicosatetraenoyl)-glycerol + O2 = 2-[12-hydroperoxy-(5Z,8Z,10E,14Z)-eicosatetraenoyl]-glycerol. The catalysed reaction is 1-octadecanoyl-2-(5Z,8Z,11Z,14Z-eicosatetraenoyl)-sn-glycero-3-phosphocholine + O2 = 1-octadecanoyl-2-(15-hydroperoxy-5Z,8Z,11Z,13E-eicosatetraenoyl)-sn-glycero-3-phosphocholine. It catalyses the reaction a 1-acyl-2-(5Z,8Z,11Z,14Z-eicosatetraenoyl)-sn-glycero-3-phospho-(1D-myo-inositol) + O2 = a 1-acyl-2-(15-hydroperoxy-5Z,8Z,11Z,13E-eicosatetraenoyl)-sn-glycero-3-phospho-(1D-myo-inositol). It carries out the reaction a 1-acyl-2-(8Z,11Z,14Z-eicosatrienoyl)-sn-glycero-3-phospho-(1D-myo-inositol) + O2 = a 1-acyl-2-(15-hydroperoxy-8Z,11Z,13E-eicosatrienoyl)-sn-glycero-3-phospho-(1D-myo-inositol). The enzyme catalyses 1-octadecanoyl-2-(5Z,8Z,11Z,14Z)-eicosatetraenoyl-sn-glycero-3-phosphoethanolamine + O2 = 1-octadecanoyl-2-(15-hydroperoxy-5Z,8Z,11Z,13E-eicosatetraenoyl)-sn-glycero-3-phosphoethanolamine. The catalysed reaction is 1-octadecanoyl-2-(5Z,8Z,11Z,14Z-eicosatetraenoyl)-sn-glycero-3-phospho-(1D-myo-inositol) + O2 = 1-octadecanoyl-2-(15-hydroperoxy-5Z,8Z,11Z,13E-eicosatetraenoyl)-sn-glycero-3-phospho-(1D-myo-inositol). It catalyses the reaction (8Z,11Z,14Z)-eicosatrienoate + O2 = 15-hydroperoxy-(8Z,11Z,13E)-eicosatrienoate. It carries out the reaction (7S)-hydroperoxy-(4Z,8E,10Z,13Z,16Z,19Z)-docosahexaenoate + O2 = (7S,17S)-dihydroperoxy-(4Z,8E,10Z,13Z,15E,19Z)-docosahexaenoate. The protein operates within lipid metabolism; hydroperoxy eicosatetraenoic acid biosynthesis. Non-heme iron-containing dioxygenase that catalyzes the stereo-specific peroxidation of free and esterified polyunsaturated fatty acids (PUFAs) generating a spectrum of bioactive lipid mediators. Inserts a peroxyl group at C15 of arachidonate ((5Z,8Z,11Z,14Z)-eicosatetraenoate) producing (15S)-hydroperoxyeicosatetraenoate/(15S)-HPETE. Also peroxidizes linoleate ((9Z,12Z)-octadecadienoate) to 13-hydroperoxyoctadecadienoate/13-HPODE. Oxygenates arachidonyl derivatives such as 2-arachidonoylglycerol (2-AG) leading to the production and extracellular release of 15-hydroxyeicosatetraenoyl glycerol (15-HETE-G) that acts as a peroxisome proliferator-activated receptor alpha agonist. Has the ability to efficiently class-switch ALOX5 pro-inflammatory mediators into anti-inflammatory intermediates. Participates in the sequential oxidations of DHA ((4Z,7Z,10Z,13Z,16Z,19Z)-docosahexaenoate) to generate specialized pro-resolving mediators (SPMs) resolvin D5 ((7S,17S)-diHPDHA), which can actively down-regulate the immune response and have anti-aggregation properties with platelets. In addition to free PUFAs hydrolyzed from phospholipids, it directly oxidizes PUFAs esterified to membrane-bound phospholipids. Has no detectable 8S-lipoxygenase activity on arachidonate but reacts with (8S)-HPETE to produce (8S,15S)-diHPETE. May regulate progression through the cell cycle and cell proliferation. May also regulate cytokine secretion by macrophages and therefore play a role in the immune response. May also regulate macrophage differentiation into proatherogenic foam cells. The polypeptide is Polyunsaturated fatty acid lipoxygenase ALOX15B (Rattus norvegicus (Rat)).